A 581-amino-acid polypeptide reads, in one-letter code: Arginine--tRNA ligase (581 aa).

Residues 126–136 (PNLAKEMHVGH) carry the 'HIGH' region motif.

It belongs to the class-I aminoacyl-tRNA synthetase family. As to quaternary structure, monomer.

The protein localises to the cytoplasm. It catalyses the reaction tRNA(Arg) + L-arginine + ATP = L-arginyl-tRNA(Arg) + AMP + diphosphate. This chain is Arginine--tRNA ligase, found in Shewanella amazonensis (strain ATCC BAA-1098 / SB2B).